Consider the following 225-residue polypeptide: Phosphoribosylformylglycinamidine synthase subunit PurQ (225 aa).

In terms of domain architecture, Glutamine amidotransferase type-1 spans 4–225 (RIGVITFPGT…LSVLDTLVTA (222 aa)). Cysteine 87 (nucleophile) is an active-site residue. Residues histidine 196 and glutamate 198 contribute to the active site.

As to quaternary structure, part of the FGAM synthase complex composed of 1 PurL, 1 PurQ and 2 PurS subunits.

Its subcellular location is the cytoplasm. The catalysed reaction is N(2)-formyl-N(1)-(5-phospho-beta-D-ribosyl)glycinamide + L-glutamine + ATP + H2O = 2-formamido-N(1)-(5-O-phospho-beta-D-ribosyl)acetamidine + L-glutamate + ADP + phosphate + H(+). It catalyses the reaction L-glutamine + H2O = L-glutamate + NH4(+). Its pathway is purine metabolism; IMP biosynthesis via de novo pathway; 5-amino-1-(5-phospho-D-ribosyl)imidazole from N(2)-formyl-N(1)-(5-phospho-D-ribosyl)glycinamide: step 1/2. In terms of biological role, part of the phosphoribosylformylglycinamidine synthase complex involved in the purines biosynthetic pathway. Catalyzes the ATP-dependent conversion of formylglycinamide ribonucleotide (FGAR) and glutamine to yield formylglycinamidine ribonucleotide (FGAM) and glutamate. The FGAM synthase complex is composed of three subunits. PurQ produces an ammonia molecule by converting glutamine to glutamate. PurL transfers the ammonia molecule to FGAR to form FGAM in an ATP-dependent manner. PurS interacts with PurQ and PurL and is thought to assist in the transfer of the ammonia molecule from PurQ to PurL. This chain is Phosphoribosylformylglycinamidine synthase subunit PurQ, found in Nocardia farcinica (strain IFM 10152).